Reading from the N-terminus, the 359-residue chain is Fructose-1,6-bisphosphatase class 1 (359 aa).

The Mg(2+) site is built by glutamate 95, aspartate 117, leucine 119, and aspartate 120. Substrate-binding positions include 120 to 123 and asparagine 212; that span reads DGSS. Glutamate 284 is a binding site for Mg(2+).

It belongs to the FBPase class 1 family. Homotetramer. The cofactor is Mg(2+).

The protein resides in the cytoplasm. It catalyses the reaction beta-D-fructose 1,6-bisphosphate + H2O = beta-D-fructose 6-phosphate + phosphate. It participates in carbohydrate biosynthesis; gluconeogenesis. The polypeptide is Fructose-1,6-bisphosphatase class 1 (Hydrogenophilus thermoluteolus (Pseudomonas hydrogenothermophila)).